The primary structure comprises 340 residues: MPHHIMSINDSNHVQIGGRKSKLAVVQSEIVKKVIEDTFPNLSCSILALSTLGDKVQTQPLYTFGGKSLWTKELEILLLDSVDEFPKLDLIVHSLKDMPTNLPEEFELGCIFQREDPRDAIVMKQGSSYKSLKDLPAGAIVGTSSIRRSSQLIKNYPHLRFESVRGNIQTRLNKLDQPNNEYCCLILASAGLIRLGLGHRITSYLDDMYYAVGQGALGIEIRKGDDNIKSILKKIEDPIATICCLAERSLMRYLEGGCSVPLGVHSDYNESKQELTLKGIIVSPDGTVSIEDEVIKRITCDEDCEQVGIELGDKLKAKGAKEILDKIDMTRNINARPTEV.

An S-(dipyrrolylmethanemethyl)cysteine modification is found at cysteine 258.

This sequence belongs to the HMBS family. Dipyrromethane serves as cofactor.

The enzyme catalyses 4 porphobilinogen + H2O = hydroxymethylbilane + 4 NH4(+). It functions in the pathway porphyrin-containing compound metabolism; protoporphyrin-IX biosynthesis; coproporphyrinogen-III from 5-aminolevulinate: step 2/4. Its function is as follows. Tetrapolymerization of the monopyrrole PBG into the hydroxymethylbilane pre-uroporphyrinogen in several discrete steps. In Candida albicans (strain SC5314 / ATCC MYA-2876) (Yeast), this protein is Porphobilinogen deaminase (HEM3).